Consider the following 273-residue polypeptide: Large ribosomal subunit protein uL2cz/uL2cy (273 aa).

2 disordered regions span residues 1 to 23 (MAIH…SQVK) and 223 to 273 (NPVD…RRSK).

The protein belongs to the universal ribosomal protein uL2 family. Part of the 50S ribosomal subunit.

The protein localises to the plastid. It is found in the chloroplast. The chain is Large ribosomal subunit protein uL2cz/uL2cy (rpl2-A) from Oenothera argillicola (Appalachian evening primrose).